Reading from the N-terminus, the 71-residue chain is Small ribosomal subunit protein bS21 (71 aa).

Positions 47–71 are disordered; that stretch reads RENATRAKRHAKRVARENARNTRLY. Over residues 60 to 71 the composition is skewed to basic and acidic residues; the sequence is VARENARNTRLY.

Belongs to the bacterial ribosomal protein bS21 family.

In Actinobacillus succinogenes (strain ATCC 55618 / DSM 22257 / CCUG 43843 / 130Z), this protein is Small ribosomal subunit protein bS21.